The sequence spans 265 residues: Urease accessory protein UreH (265 aa).

The protein belongs to the UreD family. In terms of assembly, ureH, UreF and UreG form a complex that acts as a GTP-hydrolysis-dependent molecular chaperone, activating the urease apoprotein by helping to assemble the nickel containing metallocenter of UreC. The UreE protein probably delivers the nickel.

It is found in the cytoplasm. Required for maturation of urease via the functional incorporation of the urease nickel metallocenter. In Helicobacter pylori (strain G27), this protein is Urease accessory protein UreH.